The chain runs to 387 residues: Exodeoxyribonuclease 7 large subunit (387 aa).

It belongs to the XseA family. As to quaternary structure, heterooligomer composed of large and small subunits.

The protein localises to the cytoplasm. It carries out the reaction Exonucleolytic cleavage in either 5'- to 3'- or 3'- to 5'-direction to yield nucleoside 5'-phosphates.. Its function is as follows. Bidirectionally degrades single-stranded DNA into large acid-insoluble oligonucleotides, which are then degraded further into small acid-soluble oligonucleotides. This is Exodeoxyribonuclease 7 large subunit from Campylobacter lari (strain RM2100 / D67 / ATCC BAA-1060).